Consider the following 383-residue polypeptide: MKPHFRNTVERMYRGTFFYNFNNRPILSRRNTVWLCYEVKTRGPSMPTWGAKIFRGQLYPEAKDHPEMKFLHWFRKWRQLHRDQEYEVTWYVSWSPCTRCANSVATFLAEDPKVTLTIFVARLYYFWKPDYQEALRILCQKRGGPHATMKIMNYNEFQHCWNEFVDGQGKPFKPRKNLPKHYTLLHATLGELLRHVMDPGTFTSNFNNKPWVSGQRETYLCYKVERSHNDTWVLLNQHRGFLRNQAPDRHGFPKGRHAELCFLDLIPFWKLDDQQYRVTCFTSWSPCFSCAQKMAKFISKKKHVSLCIFAARIYDDQGRRQEGLRTLHRDGAKIAVMXYSEFKHCWDTFVDHQGRPFQPWDGLDEHSQALSGRLRAILQNQGN.

Residues 1–60 (MKPHFRNTVERMYRGTFFYNFNNRPILSRRNTVWLCYEVKTRGPSMPTWGAKIFRGQLYP) form an essential for cytoplasmic localization region. CMP/dCMP-type deaminase domains are found at residues 29–138 (RRNT…LRIL) and 214–327 (GQRE…LRTL). Thr-32 is modified (phosphothreonine; by PKA). Residues His-65, Cys-97, and Cys-100 each contribute to the Zn(2+) site. The interval 209-335 (KPWVSGQRET…TLHRDGAKIA (127 aa)) is necessary for homooligomerization. The interaction with DNA stretch occupies residues 213 to 215 (SGQ). Residue Thr-218 is modified to Phosphothreonine; by PKA and CAMK2. His-257 contacts Zn(2+). The active-site Proton donor is the Glu-259. 2 residues coordinate Zn(2+): Cys-287 and Cys-290. An interaction with DNA region spans residues 312 to 319 (RIYDDQGR).

The protein belongs to the cytidine and deoxycytidylate deaminase family. Homodimer. Homooligomer. Can bind RNA to form ribonucleoprotein complexes of high-molecular-mass (HMM) or low-molecular-mass (LMM). HMM is inactive and heterogeneous in protein composition because of binding nonselectively to cellular RNAs, which in turn are associated with variety of cellular proteins. The LMM form which is enzymatically active has few or no RNAs associated. Its ability to form homooligomer is distinct from its ability to assemble into HMM. Interacts with APOBEC3B, APOBEC3F, MOV10, AGO2, EIF4E, EIF4ENIF1, DCP2 and DDX6 in an RNA-dependent manner. Interacts with AGO1, AGO3 and PKA/PRKACA. Zn(2+) is required as a cofactor.

Its subcellular location is the cytoplasm. The protein resides in the nucleus. It is found in the P-body. The catalysed reaction is a 2'-deoxycytidine in single-stranded DNA + H2O + H(+) = a 2'-deoxyuridine in single-stranded DNA + NH4(+). DNA deaminase (cytidine deaminase) which acts as an inhibitor of retrovirus replication and retrotransposon mobility. After the penetration of retroviral nucleocapsids into target cells of infection and the initiation of reverse transcription, it can induce the conversion of cytosine to uracil in the minus-sense single-strand viral DNA, leading to G-to-A hypermutations in the subsequent plus-strand viral DNA. The resultant detrimental levels of mutations in the proviral genome, along with a deamination-independent mechanism that works prior to the proviral integration, together exert efficient antiretroviral effects in infected target cells. Selectively targets single-stranded DNA and does not deaminate double-stranded DNA or single- or double-stranded RNA. In Erythrocebus patas (Red guenon), this protein is DNA dC-&gt;dU-editing enzyme APOBEC-3G (APOBEC3G).